The primary structure comprises 639 residues: Exocyst complex component EXO70E2 (639 aa).

Belongs to the EXO70 family. Component of the exocyst complex and of the exocyst-positive organelle (EXPO). Interacts with SEC6, SEC10A and SEC10B. As to expression, expressed in roots, in the root-hair zone, both in root hair and nonhair cells.

The protein localises to the secreted. The protein resides in the extracellular exosome. It is found in the cell membrane. Its subcellular location is the cytoplasm. It localises to the endomembrane system. Its function is as follows. Influences the subcellular localization patterns of other exocyst complex proteins (e.g. SEC5A, SEC15A, SEC15B and EXO84B) leading to their recruitment to exocyst, well-defined large punctate structures throughout the cytosol. Essential component for the formation and the recruitment of exocyst subunits to the exocyst-positive organelle (EXPO), a secreted double membrane structure also called extracellular exosome, that acts as a sequester for cytosolic proteins to release them into the apoplast. The chain is Exocyst complex component EXO70E2 from Arabidopsis thaliana (Mouse-ear cress).